The following is a 566-amino-acid chain: Mannitol 2-dehydrogenase (566 aa).

Position 106-117 (106-117 (IVHVGVGGFHRA)) interacts with NAD(+).

The protein belongs to the mannitol dehydrogenase family. As to quaternary structure, monomer.

The catalysed reaction is D-mannitol + NAD(+) = D-fructose + NADH + H(+). Functionally, catalyzes the NAD(H)-dependent interconversion of D-fructose and D-mannitol in the mannitol metabolic pathway. The polypeptide is Mannitol 2-dehydrogenase (Pyrenophora tritici-repentis (strain Pt-1C-BFP) (Wheat tan spot fungus)).